Here is a 67-residue protein sequence, read N- to C-terminus: DNA-directed RNA polymerase subunit omega (67 aa).

The protein belongs to the RNA polymerase subunit omega family. As to quaternary structure, the RNAP catalytic core consists of 2 alpha, 1 beta, 1 beta' and 1 omega subunit. When a sigma factor is associated with the core the holoenzyme is formed, which can initiate transcription.

The catalysed reaction is RNA(n) + a ribonucleoside 5'-triphosphate = RNA(n+1) + diphosphate. In terms of biological role, promotes RNA polymerase assembly. Latches the N- and C-terminal regions of the beta' subunit thereby facilitating its interaction with the beta and alpha subunits. The polypeptide is DNA-directed RNA polymerase subunit omega (Dictyoglomus turgidum (strain DSM 6724 / Z-1310)).